The chain runs to 464 residues: ATP synthase subunit beta 2 (464 aa).

147–154 (GGAGVGKT) contacts ATP.

The protein belongs to the ATPase alpha/beta chains family. As to quaternary structure, F-type ATPases have 2 components, CF(1) - the catalytic core - and CF(0) - the membrane proton channel. CF(1) has five subunits: alpha(3), beta(3), gamma(1), delta(1), epsilon(1). CF(0) has four main subunits: a(1), b(1), b'(1) and c(9-12).

Its subcellular location is the cell inner membrane. It catalyses the reaction ATP + H2O + 4 H(+)(in) = ADP + phosphate + 5 H(+)(out). Functionally, produces ATP from ADP in the presence of a proton gradient across the membrane. The catalytic sites are hosted primarily by the beta subunits. In Cereibacter sphaeroides (strain ATCC 17023 / DSM 158 / JCM 6121 / CCUG 31486 / LMG 2827 / NBRC 12203 / NCIMB 8253 / ATH 2.4.1.) (Rhodobacter sphaeroides), this protein is ATP synthase subunit beta 2.